The chain runs to 305 residues: tRNA pseudouridine synthase B (305 aa).

D39 serves as the catalytic Nucleophile. The region spanning 237 to 305 (LPVIIVPGEF…FLLKPHKVLK (69 aa)) is the PUA domain.

The protein belongs to the pseudouridine synthase TruB family. Type 1 subfamily.

It carries out the reaction uridine(55) in tRNA = pseudouridine(55) in tRNA. Responsible for synthesis of pseudouridine from uracil-55 in the psi GC loop of transfer RNAs. In Moorella thermoacetica (strain ATCC 39073 / JCM 9320), this protein is tRNA pseudouridine synthase B.